A 798-amino-acid polypeptide reads, in one-letter code: Cation channel sperm-associated auxiliary subunit delta (798 aa).

The first 20 residues, 1-20 (MLMLMLVAAVTMWLRPLVTA), serve as a signal peptide directing secretion. Topologically, residues 21 to 723 (QLCRSRTVRT…AFPVQLVSAG (703 aa)) are extracellular. Intrachain disulfides connect cysteine 23–cysteine 369, cysteine 59–cysteine 145, cysteine 144–cysteine 152, cysteine 387–cysteine 496, cysteine 510–cysteine 701, cysteine 525–cysteine 572, and cysteine 624–cysteine 652. Residue asparagine 123 is glycosylated (N-linked (GlcNAc...) asparagine). Residues asparagine 230, asparagine 240, asparagine 472, asparagine 538, and asparagine 630 are each glycosylated (N-linked (GlcNAc...) asparagine). The chain crosses the membrane as a helical span at residues 724-745 (VVILLIISSILGSVWLAYKTPK). Residues 746 to 798 (LLRTARGRRIKKCATQLCRRCKTVCQFRASATARAGTEPPGRHRTPHGGRSDH) lie on the Cytoplasmic side of the membrane.

It belongs to the CATSPERD family. Component of the CatSper complex or CatSpermasome composed of the core pore-forming members CATSPER1, CATSPER2, CATSPER3 and CATSPER4 as well as auxiliary members CATSPERB, CATSPERG, CATSPERD, CATSPERE, CATSPERZ, C2CD6/CATSPERT, TMEM249, TMEM262 and EFCAB9. HSPA1 may be an additional auxiliary complex member. The core complex members CATSPER1, CATSPER2, CATSPER3 and CATSPER4 form a heterotetrameric channel. The auxiliary CATSPERB, CATSPERG, CATSPERD and CATSPERE subunits form a pavilion-like structure over the pore which stabilizes the complex through interactions with CATSPER4, CATSPER3, CATSPER1 and CATSPER2 respectively. TMEM262/CATSPERH interacts with CATSPERB, further stabilizing the complex. C2CD6/CATSPERT interacts at least with CATSPERD and is required for targeting the CatSper complex in the flagellar membrane.

Its subcellular location is the cell projection. The protein resides in the cilium. The protein localises to the flagellum membrane. In terms of biological role, auxiliary component of the CatSper complex, a complex involved in sperm cell hyperactivation. Sperm cell hyperactivation is needed for sperm motility which is essential late in the preparation of sperm for fertilization. Required for CATSPER1 stability before intraflagellar transport and/or incorporation of the CatSper complex channel into the flagellar membrane. The protein is Cation channel sperm-associated auxiliary subunit delta of Homo sapiens (Human).